The sequence spans 149 residues: Protein E6 (149 aa).

Zinc fingers lie at residues 30 to 66 (CVYC…CTKC) and 103 to 139 (CITC…CIAC). The PDZ-binding domain signature appears at 147–149 (TQV).

Belongs to the papillomaviridae E6 protein family. As to quaternary structure, forms homodimers. Interacts with ubiquitin-protein ligase UBE3A/E6-AP and thus forms a complex with human TP53. Interacts with human NFX1 and MAGI3. Interacts with human IRF3; this interaction inhibits the establishment of antiviral state. Interacts with human TYK2; this interaction inhibits JAK-STAT activation by interferon alpha. Interacts with host DLG1; this interaction leads to the proteasomal degradation of DLG1.

Its subcellular location is the host cytoplasm. It localises to the host nucleus. Its function is as follows. Plays a major role in the induction and maintenance of cellular transformation. Acts mainly as an oncoprotein by stimulating the destruction of many host cell key regulatory proteins. E6 associates with host UBE3A/E6-AP ubiquitin-protein ligase, and inactivates tumor suppressors TP53 and TP73 by targeting them to the 26S proteasome for degradation. In turn, DNA damage and chromosomal instabilities increase and lead to cell proliferation and cancer development. The complex E6/E6AP targets several other substrates to degradation via the proteasome including host DLG1 or NFX1, a repressor of human telomerase reverse transcriptase (hTERT). The resulting increased expression of hTERT prevents the shortening of telomere length leading to cell immortalization. Other cellular targets including BAK1, Fas-associated death domain-containing protein (FADD) and procaspase 8, are degraded by E6/E6AP causing inhibition of apoptosis. E6 also inhibits immune response by interacting with host IRF3 and TYK2. These interactions prevent IRF3 transcriptional activities and inhibit TYK2-mediated JAK-STAT activation by interferon alpha resulting in inhibition of the interferon signaling pathway. The chain is Protein E6 from Human papillomavirus 31.